A 38-amino-acid polypeptide reads, in one-letter code: Cytochrome b6-f complex subunit 5 (38 aa).

A helical transmembrane segment spans residues 5–25 (LVLGIVLGLIPITLAGLFVAA).

Belongs to the PetG family. In terms of assembly, the 4 large subunits of the cytochrome b6-f complex are cytochrome b6, subunit IV (17 kDa polypeptide, PetD), cytochrome f and the Rieske protein, while the 4 small subunits are PetG, PetL, PetM and PetN. The complex functions as a dimer.

The protein localises to the cellular thylakoid membrane. In terms of biological role, component of the cytochrome b6-f complex, which mediates electron transfer between photosystem II (PSII) and photosystem I (PSI), cyclic electron flow around PSI, and state transitions. PetG is required for either the stability or assembly of the cytochrome b6-f complex. The protein is Cytochrome b6-f complex subunit 5 of Microcystis aeruginosa (strain NIES-843 / IAM M-2473).